The sequence spans 847 residues: Leucine--tRNA ligase (847 aa).

The 'HIGH' region motif lies at Pro-43–His-53. Residues Lys-607–Ser-611 carry the 'KMSKS' region motif. Lys-610 is a binding site for ATP.

Belongs to the class-I aminoacyl-tRNA synthetase family.

The protein localises to the cytoplasm. It catalyses the reaction tRNA(Leu) + L-leucine + ATP = L-leucyl-tRNA(Leu) + AMP + diphosphate. The polypeptide is Leucine--tRNA ligase (Buchnera aphidicola subsp. Cinara cedri (strain Cc)).